The following is a 1007-amino-acid chain: Aldehyde reductase lnbA (1007 aa).

Residues 35 to 428 (QVRQSPSSIA…GRVDHQIKVR (394 aa)) are adenylation (A) domain. Residues 540–617 (TLCQDTQTVL…ALASIIDHAK (78 aa)) enclose the Carrier domain. Ser577 carries the O-(pantetheine 4'-phosphoryl)serine modification. The tract at residues 659–998 (IFITGATGFV…PTLDCSLLKK (340 aa)) is short-chain dehydrogenase/reductase (R) domain.

Belongs to the NRP synthetase family.

The catalysed reaction is L-tyrosinal + AMP + diphosphate + NADP(+) = L-tyrosine + ATP + NADPH + H(+). It functions in the pathway secondary metabolite biosynthesis. In terms of biological role, non-canonical nonribosomal peptide synthetase; part of the lnb gene cluster that mediates the biosynthesis of diastereomeric piperazines. Lna and lnb clusters encode sets of enzymes that produce overlapping sets of previously undescribed metabolites such as piperazinomycin-like metabolites or morpholine. The lna and lnb biosynthetic pathways appear to be part of a signaling network that controls the formation of sclerotia, a resilient overwintering structure. One primary function of the non-canonical nonribosomal peptide synthetases lnaA and lnbA consists in the reduction of L-tyrosine. The presence in the clusters of tailoring enzymes such as the oxidoreductases lnaB, lnbB, lnaE or lnbE, as well as of the cytochrome P450 monooxygenases lnaC, lnaD, or lnbC, might explain formation of various diastereomeric piperazines. The sequence is that of Aldehyde reductase lnbA from Aspergillus flavus (strain ATCC 200026 / FGSC A1120 / IAM 13836 / NRRL 3357 / JCM 12722 / SRRC 167).